The chain runs to 134 residues: MAESFNFELVSPERLLVSEKVTEVVIPATEGEMTVMANHAPTMTTIKPGVVAVKTAAGKTERYAVFGGFADILPSGCTLLAESAVHVDELDPTVLENRIEAARAELEGAGDEKKTRLEQFIAELTKLGEIVIPA.

This sequence belongs to the ATPase epsilon chain family. In terms of assembly, F-type ATPases have 2 components, CF(1) - the catalytic core - and CF(0) - the membrane proton channel. CF(1) has five subunits: alpha(3), beta(3), gamma(1), delta(1), epsilon(1). CF(0) has three main subunits: a, b and c.

It localises to the cell inner membrane. Functionally, produces ATP from ADP in the presence of a proton gradient across the membrane. This chain is ATP synthase epsilon chain, found in Rhizobium meliloti (strain 1021) (Ensifer meliloti).